Here is a 683-residue protein sequence, read N- to C-terminus: Acyl-CoA synthetase short-chain family member 3, mitochondrial (683 aa).

The transit peptide at 1 to 29 directs the protein to the mitochondrion; that stretch reads MKPSWLQCRKVTGAGTLGAPLPGSPSVRG. 223 to 226 lines the CoA pocket; sequence EPGR. ATP is bound by residues 421 to 423 and 442 to 447; these read GER and DHWWQT. Lys514 carries the post-translational modification N6-succinyllysine. At Lys520 the chain carries N6-acetyllysine. Residues Asp535, Arg550, and Arg561 each coordinate ATP. Arg620 is a binding site for CoA.

It belongs to the ATP-dependent AMP-binding enzyme family. As to expression, expressed in a wide range of tissues, with the highest levels observed in the liver followed by kidney.

The protein localises to the mitochondrion matrix. The catalysed reaction is acetate + ATP + CoA = acetyl-CoA + AMP + diphosphate. It carries out the reaction propanoate + ATP + CoA = propanoyl-CoA + AMP + diphosphate. The enzyme catalyses butanoate + ATP + CoA = butanoyl-CoA + AMP + diphosphate. In terms of biological role, catalyzes the synthesis of acetyl-CoA from short-chain fatty acids. Propionate is the preferred substrate but can also utilize acetate and butyrate with a much lower affinity. In Rattus norvegicus (Rat), this protein is Acyl-CoA synthetase short-chain family member 3, mitochondrial (Acss3).